Consider the following 335-residue polypeptide: Mycobacterial beta-ketoacyl-[acyl-carrier-protein] synthase III (335 aa).

Residues C122 and H258 contribute to the active site. Positions 259–263 (QANSR) are ACP-binding. N289 is a catalytic residue.

Belongs to the thiolase-like superfamily. FabH family. In terms of assembly, homodimer.

Its subcellular location is the cytoplasm. It carries out the reaction malonyl-[ACP] + dodecanoyl-CoA + H(+) = 3-oxotetradecanoyl-[ACP] + CO2 + CoA. It participates in lipid metabolism; fatty acid biosynthesis. Its pathway is lipid metabolism; mycolic acid biosynthesis. Functionally, catalyzes the condensation reaction of fatty acid synthesis by the addition to an acyl acceptor of two carbons from malonyl-ACP. Catalyzes the first condensation reaction which initiates fatty acid synthesis and may therefore play a role in governing the total rate of fatty acid production. Possesses both acetoacetyl-ACP synthase and acetyl transacylase activities. Its substrate specificity determines the biosynthesis of branched-chain and/or straight-chain of fatty acids. This Mycobacterium avium (strain 104) protein is Mycobacterial beta-ketoacyl-[acyl-carrier-protein] synthase III.